The sequence spans 382 residues: Transcription termination/antitermination protein NusA (382 aa).

In terms of domain architecture, S1 motif spans Glu135 to Thr199. A KH domain is found at Glu301 to Asp367. The disordered stretch occupies residues Leu348–Glu382.

Belongs to the NusA family. Monomer. Binds directly to the core enzyme of the DNA-dependent RNA polymerase and to nascent RNA.

It localises to the cytoplasm. Its function is as follows. Participates in both transcription termination and antitermination. In Halalkalibacterium halodurans (strain ATCC BAA-125 / DSM 18197 / FERM 7344 / JCM 9153 / C-125) (Bacillus halodurans), this protein is Transcription termination/antitermination protein NusA.